A 798-amino-acid chain; its full sequence is Cold shock domain-containing protein E1 (798 aa).

The CSD 1 domain maps to Glu26 to Leu87. Residue Lys81 is modified to N6-acetyllysine. Residue Lys91 forms a Glycyl lysine isopeptide (Lys-Gly) (interchain with G-Cter in SUMO2) linkage. Ser123 is subject to Phosphoserine. The region spanning Val136–Leu179 is the CSD 2; truncated domain. The CSD 3 domain occupies Cys186 to Val245. A Phosphoserine modification is found at Ser276. Residues Leu297 to Leu337 enclose the CSD 4; truncated domain. 2 consecutive CSD domains span residues Glu349 to Ile410 and Asn447 to Val507. Ser514 is subject to Phosphoserine. Positions Leu519–Val579 constitute a CSD 7 domain. Ser584 carries the post-translational modification Phosphoserine. CSD domains are found at residues Pro610 to Ile670 and Arg674 to Val735. One can recognise an SUZ-C domain in the interval Pro748–Arg789. Position 761 is a phosphothreonine (Thr761).

Belongs to the UNR family. As to quaternary structure, component of a multi subunit autoregulatory ribonucleoprotein complex (ARC), at least composed of IGF2BP1, PABPC1 and CSDE1. Interacts with STRAP. Part of a complex associated with the FOS mCRD domain and consisting of PABPC1, PAIP1, HNRPD and SYNCRIP. The interaction with PABPC1 is direct and RNA-independent. Interacts with EIF4ENIF1/4E-T.

It is found in the cytoplasm. The protein resides in the stress granule. Its subcellular location is the P-body. Functionally, RNA-binding protein involved in translationally coupled mRNA turnover. Implicated with other RNA-binding proteins in the cytoplasmic deadenylation/translational and decay interplay of the FOS mRNA mediated by the major coding-region determinant of instability (mCRD) domain. Required for efficient formation of stress granules. The polypeptide is Cold shock domain-containing protein E1 (Mus musculus (Mouse)).